Consider the following 364-residue polypeptide: Succinyl-diaminopimelate desuccinylase (364 aa).

Residue His64 coordinates Zn(2+). Residue Asp66 is part of the active site. Asp95 serves as a coordination point for Zn(2+). Glu125 functions as the Proton acceptor in the catalytic mechanism. The Zn(2+) site is built by Glu126, Glu154, and His339.

Belongs to the peptidase M20A family. DapE subfamily. In terms of assembly, homodimer. Zn(2+) is required as a cofactor. Requires Co(2+) as cofactor.

The enzyme catalyses N-succinyl-(2S,6S)-2,6-diaminopimelate + H2O = (2S,6S)-2,6-diaminopimelate + succinate. Its pathway is amino-acid biosynthesis; L-lysine biosynthesis via DAP pathway; LL-2,6-diaminopimelate from (S)-tetrahydrodipicolinate (succinylase route): step 3/3. Its function is as follows. Catalyzes the hydrolysis of N-succinyl-L,L-diaminopimelic acid (SDAP), forming succinate and LL-2,6-diaminopimelate (DAP), an intermediate involved in the bacterial biosynthesis of lysine and meso-diaminopimelic acid, an essential component of bacterial cell walls. This is Succinyl-diaminopimelate desuccinylase from Nitratiruptor sp. (strain SB155-2).